Here is a 393-residue protein sequence, read N- to C-terminus: Envelope glycoprotein M (393 aa).

Topologically, residues methionine 1–serine 14 are intravirion. Residues tryptophan 15–phenylalanine 35 form a helical membrane-spanning segment. Over alanine 36–serine 83 the chain is Virion surface. Residues phenylalanine 84 to valine 104 form a helical membrane-spanning segment. Residues valine 105–proline 130 lie on the Intravirion side of the membrane. A helical membrane pass occupies residues glycine 131–alanine 151. Residues histidine 152–glutamine 154 lie on the Virion surface side of the membrane. A helical membrane pass occupies residues alanine 155–cysteine 175. At histidine 176–asparagine 207 the chain is on the intravirion side. Residues valine 208 to leucine 228 traverse the membrane as a helical segment. At alanine 229–glutamate 241 the chain is on the virion surface side. The chain crosses the membrane as a helical span at residues alanine 242–valine 262. At serine 263–glycine 264 the chain is on the intravirion side. The chain crosses the membrane as a helical span at residues tyrosine 265 to valine 285. The Virion surface portion of the chain corresponds to serine 286–glycine 303. A helical membrane pass occupies residues valine 304–valine 324. Over valine 325–glutamate 393 the chain is Intravirion.

Belongs to the herpesviridae glycoprotein M family. Interacts (via N-terminus) with gN (via N-terminus). The gM-gN heterodimer forms the gCII complex.

The protein localises to the virion membrane. Its subcellular location is the host Golgi apparatus. It is found in the host trans-Golgi network. The protein resides in the host endosome membrane. It localises to the host nucleus inner membrane. In terms of biological role, envelope glycoprotein important for virion assembly and egress. Plays a role in the correct incorporation of gH-gL into virion membrane. Directs the glycoprotein N (gN) to the host trans-Golgi network. In Suid herpesvirus 1 (SuHV-1), this protein is Envelope glycoprotein M.